Reading from the N-terminus, the 63-residue chain is Cecropin-B (63 aa).

The N-terminal stretch at 1–22 is a signal peptide; the sequence is MNFNKIFVFVALILAISLGNTE. Residue Arg62 is modified to Arginine amide.

Belongs to the cecropin family.

The protein localises to the secreted. Functionally, cecropins have lytic and antibacterial activity against several Gram-positive and Gram-negative bacteria. This Drosophila simulans (Fruit fly) protein is Cecropin-B (CecB).